Reading from the N-terminus, the 295-residue chain is 4-hydroxy-tetrahydrodipicolinate synthase (295 aa).

Thr47 lines the pyruvate pocket. The active-site Proton donor/acceptor is Tyr135. Residue Lys163 is the Schiff-base intermediate with substrate of the active site. Residue Ile204 coordinates pyruvate.

This sequence belongs to the DapA family. As to quaternary structure, homotetramer; dimer of dimers.

The protein resides in the cytoplasm. It catalyses the reaction L-aspartate 4-semialdehyde + pyruvate = (2S,4S)-4-hydroxy-2,3,4,5-tetrahydrodipicolinate + H2O + H(+). Its pathway is amino-acid biosynthesis; L-lysine biosynthesis via DAP pathway; (S)-tetrahydrodipicolinate from L-aspartate: step 3/4. Its function is as follows. Catalyzes the condensation of (S)-aspartate-beta-semialdehyde [(S)-ASA] and pyruvate to 4-hydroxy-tetrahydrodipicolinate (HTPA). The sequence is that of 4-hydroxy-tetrahydrodipicolinate synthase from Caldicellulosiruptor bescii (strain ATCC BAA-1888 / DSM 6725 / KCTC 15123 / Z-1320) (Anaerocellum thermophilum).